The following is a 353-amino-acid chain: Phosphate acyltransferase (353 aa).

It belongs to the PlsX family. In terms of assembly, homodimer. Probably interacts with PlsY.

Its subcellular location is the cytoplasm. The catalysed reaction is a fatty acyl-[ACP] + phosphate = an acyl phosphate + holo-[ACP]. Its pathway is lipid metabolism; phospholipid metabolism. Functionally, catalyzes the reversible formation of acyl-phosphate (acyl-PO(4)) from acyl-[acyl-carrier-protein] (acyl-ACP). This enzyme utilizes acyl-ACP as fatty acyl donor, but not acyl-CoA. This Rhodopseudomonas palustris (strain ATCC BAA-98 / CGA009) protein is Phosphate acyltransferase.